The chain runs to 44 residues: Large ribosomal subunit protein bL34 (44 aa).

The segment at 21 to 44 (RMDTSGGRRILSARRRKGRKTISA) is disordered. Positions 31-44 (LSARRRKGRKTISA) are enriched in basic residues.

This sequence belongs to the bacterial ribosomal protein bL34 family.

This Endomicrobium trichonymphae protein is Large ribosomal subunit protein bL34.